We begin with the raw amino-acid sequence, 62 residues long: Mu-elapitoxin-Na1a (62 aa).

Intrachain disulfides connect cysteine 3/cysteine 22, cysteine 15/cysteine 40, cysteine 44/cysteine 55, and cysteine 56/cysteine 61.

The protein belongs to the three-finger toxin family. Short-chain subfamily. Orphan group XV sub-subfamily. As to expression, expressed by the venom gland.

Its subcellular location is the secreted. Functionally, potent inhibitor of human Nav1.8/SCN10A (IC(50)=141-380 nM). Is highly selective for this channel and acts in a reversible manner. Shows a depolarizing shift of activation and hyperpolarizing shift of inactivation. In contrast to the very similar cytotoxin A5 (AC P62375), does not seem to bind integrin alpha-V/beta-3, since it does not promote or inhibit the proliferation of HUVECs and C-PAE cells. In vivo, in rodent models of inflammatory and neuropathic pain, it alleviates nociceptive behaviors more potently than does morphine. It displays no evident cytotoxic, hemolytic and cardiotoxic activities and produces no obvious adverse responses in mice even at a dose 30-fold higher than that producing a significant analgesic effect. This Naja atra (Chinese cobra) protein is Mu-elapitoxin-Na1a.